We begin with the raw amino-acid sequence, 85 residues long: UPF0386 protein HNE_3437 (85 aa).

The protein belongs to the UPF0386 family.

This is UPF0386 protein HNE_3437 from Hyphomonas neptunium (strain ATCC 15444).